We begin with the raw amino-acid sequence, 341 residues long: Fe-S cluster assembly protein DRE2 (341 aa).

The segment at methionine 1–leucine 157 is N-terminal SAM-like domain. The interval leucine 151–leucine 171 is disordered. Residues leucine 157–alanine 204 are linker. Positions serine 161–glutamine 170 are enriched in acidic residues. [2Fe-2S] cluster is bound by residues cysteine 215, cysteine 227, cysteine 230, and cysteine 232. A fe-S binding site A region spans residues cysteine 215 to cysteine 232. Residues cysteine 304, cysteine 307, cysteine 315, and cysteine 318 each contribute to the [4Fe-4S] cluster site. Short sequence motifs (cx2C motif) lie at residues cysteine 304–cysteine 307 and cysteine 315–cysteine 318. The fe-S binding site B stretch occupies residues cysteine 304–cysteine 318.

The protein belongs to the anamorsin family. Monomer. Interacts with TAH18. Interacts with MIA40. It depends on [2Fe-2S] cluster as a cofactor. Requires [4Fe-4S] cluster as cofactor.

The protein localises to the cytoplasm. The protein resides in the mitochondrion intermembrane space. Functionally, component of the cytosolic iron-sulfur (Fe-S) protein assembly (CIA) machinery required for the maturation of extramitochondrial Fe-S proteins. Part of an electron transfer chain functioning in an early step of cytosolic Fe-S biogenesis, facilitating the de novo assembly of a [4Fe-4S] cluster on the scaffold complex CFD1-NBP35. Electrons are transferred to DRE2 from NADPH via the FAD- and FMN-containing protein TAH18. TAH18-DRE2 are also required for the assembly of the diferric tyrosyl radical cofactor of ribonucleotide reductase (RNR), probably by providing electrons for reduction during radical cofactor maturation in the catalytic small subunit RNR2. This Komagataella phaffii (strain GS115 / ATCC 20864) (Yeast) protein is Fe-S cluster assembly protein DRE2.